We begin with the raw amino-acid sequence, 878 residues long: Alanine--tRNA ligase (878 aa).

Zn(2+) is bound by residues H566, H570, C668, and H672.

Belongs to the class-II aminoacyl-tRNA synthetase family. The cofactor is Zn(2+).

It is found in the cytoplasm. The catalysed reaction is tRNA(Ala) + L-alanine + ATP = L-alanyl-tRNA(Ala) + AMP + diphosphate. In terms of biological role, catalyzes the attachment of alanine to tRNA(Ala) in a two-step reaction: alanine is first activated by ATP to form Ala-AMP and then transferred to the acceptor end of tRNA(Ala). Also edits incorrectly charged Ser-tRNA(Ala) and Gly-tRNA(Ala) via its editing domain. This chain is Alanine--tRNA ligase, found in Geobacillus thermodenitrificans (strain NG80-2).